A 205-amino-acid polypeptide reads, in one-letter code: MRGYFIVLEGIDGSGKTTQAKLLAEWFEDKGYEVLLTKEPTDSELGKLIRRIILEESVIDGSKISYEAEALLFAADRAEHVKKIILPALSEGKVVICDRYFYSSLAYQWARGLDLNWLIQVNSFAPRPDLAILLDLPVKESLRRIKLRGTLTEFDKIVELQRKVRHNYLKLAEMFPEMRIVNALSSIEDIHSDIVALVKHELLGL.

10 to 17 is a binding site for ATP; the sequence is GIDGSGKT.

The protein belongs to the thymidylate kinase family.

The catalysed reaction is dTMP + ATP = dTDP + ADP. The protein is Probable thymidylate kinase (tmk) of Pyrococcus horikoshii (strain ATCC 700860 / DSM 12428 / JCM 9974 / NBRC 100139 / OT-3).